We begin with the raw amino-acid sequence, 237 residues long: Demethylmenaquinone methyltransferase (237 aa).

Residues Thr58, Asp79, and 106–107 (NA) each bind S-adenosyl-L-methionine.

Belongs to the class I-like SAM-binding methyltransferase superfamily. MenG/UbiE family.

The enzyme catalyses a 2-demethylmenaquinol + S-adenosyl-L-methionine = a menaquinol + S-adenosyl-L-homocysteine + H(+). Its pathway is quinol/quinone metabolism; menaquinone biosynthesis; menaquinol from 1,4-dihydroxy-2-naphthoate: step 2/2. Functionally, methyltransferase required for the conversion of demethylmenaquinol (DMKH2) to menaquinol (MKH2). The sequence is that of Demethylmenaquinone methyltransferase from Anoxybacillus flavithermus (strain DSM 21510 / WK1).